Reading from the N-terminus, the 167-residue chain is Phosphorelay intermediate protein YPD1 (167 aa).

The HPt domain occupies 24 to 129 (DSDFSKGLII…DDEEIKIQVD (106 aa)). His-64 is modified (phosphohistidine).

It belongs to the YPD1 family. Interacts with the response regulatory domains of SLN1 and SSK1. In terms of processing, the phosphorelay mechanism involves the sequential transfer of a phosphate group from 'His-576' (H1) to 'Asp-1144' (D1) of SLN1, then to His-64 (H2) of YPD1 and finally to 'Asp-554' (D2) of SSK1 or 'Asp-427' (D2) of SKN7.

The protein localises to the cytoplasm. Its subcellular location is the nucleus. Its function is as follows. Phosphorelay intermediate protein that is part of the branched SLN1-YPD1-SKN7/SSK1 two-component regulatory system, which controls activity of the HOG1 pathway and gene expression in response to changes in the osmolarity of the extracellular environment. Catalyzes the phosphoryl group transfer from the membrane-bound osmosensing histidine kinase SLN1 to two distinct response regulator proteins, SSK1 in the cytoplasm, and transcription factor SKN7 in the nucleus. In Saccharomyces cerevisiae (strain ATCC 204508 / S288c) (Baker's yeast), this protein is Phosphorelay intermediate protein YPD1 (YPD1).